A 432-amino-acid polypeptide reads, in one-letter code: UDP-N-acetylglucosamine 1-carboxyvinyltransferase (432 aa).

Phosphoenolpyruvate is bound at residue 22–23; that stretch reads KN. Arg101 provides a ligand contact to UDP-N-acetyl-alpha-D-glucosamine. Catalysis depends on Cys125, which acts as the Proton donor. 2-(S-cysteinyl)pyruvic acid O-phosphothioketal is present on Cys125. UDP-N-acetyl-alpha-D-glucosamine is bound by residues 130-134, Asp315, and Ile337; that span reads RPVDL.

The protein belongs to the EPSP synthase family. MurA subfamily.

It is found in the cytoplasm. The catalysed reaction is phosphoenolpyruvate + UDP-N-acetyl-alpha-D-glucosamine = UDP-N-acetyl-3-O-(1-carboxyvinyl)-alpha-D-glucosamine + phosphate. It functions in the pathway cell wall biogenesis; peptidoglycan biosynthesis. Functionally, cell wall formation. Adds enolpyruvyl to UDP-N-acetylglucosamine. This is UDP-N-acetylglucosamine 1-carboxyvinyltransferase from Paramagnetospirillum magneticum (strain ATCC 700264 / AMB-1) (Magnetospirillum magneticum).